We begin with the raw amino-acid sequence, 210 residues long: Chaperone protein TorD (210 aa).

This sequence belongs to the TorD/DmsD family. TorD subfamily.

It is found in the cytoplasm. Its function is as follows. Involved in the biogenesis of TorA. Acts on TorA before the insertion of the molybdenum cofactor and, as a result, probably favors a conformation of the apoenzyme that is competent for acquiring the cofactor. This is Chaperone protein TorD from Salmonella dublin (strain CT_02021853).